Here is a 387-residue protein sequence, read N- to C-terminus: Chaperone protein DnaJ (387 aa).

The region spanning 5–70 (DYYEILEVSA…QKRQAYDQFG (66 aa)) is the J domain. A CR-type zinc finger spans residues 130–208 (GTTVDVRIPT…CRGEGYKHSS (79 aa)). 8 residues coordinate Zn(2+): Cys-143, Cys-146, Cys-160, Cys-163, Cys-182, Cys-185, Cys-196, and Cys-199. CXXCXGXG motif repeat units follow at residues 143-150 (CESCDGSG), 160-167 (CPTCQGIG), 182-189 (CPNCHGTG), and 196-203 (CKTCRGEG).

It belongs to the DnaJ family. In terms of assembly, homodimer. Requires Zn(2+) as cofactor.

The protein resides in the cytoplasm. Participates actively in the response to hyperosmotic and heat shock by preventing the aggregation of stress-denatured proteins and by disaggregating proteins, also in an autonomous, DnaK-independent fashion. Unfolded proteins bind initially to DnaJ; upon interaction with the DnaJ-bound protein, DnaK hydrolyzes its bound ATP, resulting in the formation of a stable complex. GrpE releases ADP from DnaK; ATP binding to DnaK triggers the release of the substrate protein, thus completing the reaction cycle. Several rounds of ATP-dependent interactions between DnaJ, DnaK and GrpE are required for fully efficient folding. Also involved, together with DnaK and GrpE, in the DNA replication of plasmids through activation of initiation proteins. In Hydrogenovibrio crunogenus (strain DSM 25203 / XCL-2) (Thiomicrospira crunogena), this protein is Chaperone protein DnaJ.